The following is a 693-amino-acid chain: Pentatricopeptide repeat-containing protein At2g19280 (693 aa).

PPR repeat units follow at residues Leu-200 to Pro-234, Ser-235 to Leu-269, Asn-270 to Pro-304, Asp-305 to Gln-339, Asp-340 to Arg-370, Asn-372 to Pro-406, Asp-407 to Pro-441, Ser-442 to Leu-476, Asp-477 to Pro-511, Asp-512 to Pro-546, Ser-547 to Pro-581, Asp-582 to Pro-616, and Asp-617 to Pro-651.

This sequence belongs to the PPR family. P subfamily.

The polypeptide is Pentatricopeptide repeat-containing protein At2g19280 (Arabidopsis thaliana (Mouse-ear cress)).